The sequence spans 183 residues: UPF0302 protein BH3876 (183 aa).

This sequence belongs to the UPF0302 family.

The chain is UPF0302 protein BH3876 from Halalkalibacterium halodurans (strain ATCC BAA-125 / DSM 18197 / FERM 7344 / JCM 9153 / C-125) (Bacillus halodurans).